A 198-amino-acid polypeptide reads, in one-letter code: Ribonuclease HII (198 aa).

The 189-residue stretch at 10–198 (QLVAGVDEVG…PVKRALGLAS (189 aa)) folds into the RNase H type-2 domain. A divalent metal cation is bound by residues aspartate 16, glutamate 17, and aspartate 108.

Belongs to the RNase HII family. It depends on Mn(2+) as a cofactor. Mg(2+) is required as a cofactor.

It localises to the cytoplasm. It catalyses the reaction Endonucleolytic cleavage to 5'-phosphomonoester.. In terms of biological role, endonuclease that specifically degrades the RNA of RNA-DNA hybrids. This Citrobacter koseri (strain ATCC BAA-895 / CDC 4225-83 / SGSC4696) protein is Ribonuclease HII.